The chain runs to 224 residues: MQILLVEDDNTLFQELKKELEQWDFNVAGIEDFGKVMDTFESFNPEIVILDVQLPKYDGFYWCRKMREVSNVPILFLSSRDNPMDQVMSMELGADDYMQKPFYTNVLIAKLQAIYRRVYEFTAEEKRTLTWQDAIIDLSKDSIQKGDDTIFLSKTEMIILEILITKKNQIVSRDTIITALWDDEAFVSDNTLTVNVNRLRKKLSEISMDSAIETKVGKGYMAHE.

The region spanning 2–115 (QILLVEDDNT…VLIAKLQAIY (114 aa)) is the Response regulatory domain. At Asp-51 the chain carries 4-aspartylphosphate. A DNA-binding region (ompR/PhoB-type) is located at residues 126–224 (KRTLTWQDAI…KVGKGYMAHE (99 aa)). Residues Thr-128, Thr-130, and Thr-149 each carry the phosphothreonine modification.

Interacts with GraX. In terms of processing, phosphorylated by GraS. Phosphorylated by Stk1; phosphorylation increases the DNA-binding activity of GraR.

It localises to the cytoplasm. In terms of biological role, member of the two-component regulatory system GraR/GraS involved in resistance against cationic antimicrobial peptides (CAMPs). Upon phosphorylation by GraS, functions as a transcription regulator by direct binding to promoter regions of target genes such as adhesins, exoproteins, transporters, toxins, and proteins involved in cell wall synthesis. Down-regulates the expression of many genes involved in RNA and amino acid synthesis or glycolysis. This chain is Response regulator protein GraR (graR), found in Staphylococcus aureus (strain bovine RF122 / ET3-1).